The following is a 118-amino-acid chain: Large ribosomal subunit protein uL24 (118 aa).

This sequence belongs to the universal ribosomal protein uL24 family. Part of the 50S ribosomal subunit.

In terms of biological role, one of two assembly initiator proteins, it binds directly to the 5'-end of the 23S rRNA, where it nucleates assembly of the 50S subunit. Functionally, one of the proteins that surrounds the polypeptide exit tunnel on the outside of the subunit. In Synechococcus sp. (strain WH7803), this protein is Large ribosomal subunit protein uL24.